The following is a 176-amino-acid chain: uncharacterized protein (176 aa).

Residues 1-22 (MKYNNIIFLGLCLGLTTYSALS) form the signal peptide. An intrachain disulfide couples Cys38 to Cys78.

The protein belongs to the fimbrial protein family.

It localises to the fimbrium. This is an uncharacterized protein from Escherichia coli (strain K12).